A 265-amino-acid polypeptide reads, in one-letter code: Phosphate import ATP-binding protein PstB 1 (265 aa).

One can recognise an ABC transporter domain in the interval 20–260; the sequence is LSTNDLSVLY…PKGKITEDYI (241 aa). 53-60 lines the ATP pocket; it reads GASGSGKS.

The protein belongs to the ABC transporter superfamily. Phosphate importer (TC 3.A.1.7) family. In terms of assembly, the complex is composed of two ATP-binding proteins (PstB), two transmembrane proteins (PstC and PstA) and a solute-binding protein (PstS).

Its subcellular location is the cell membrane. The enzyme catalyses phosphate(out) + ATP + H2O = ADP + 2 phosphate(in) + H(+). Part of the ABC transporter complex PstSACB involved in phosphate import. Responsible for energy coupling to the transport system. The protein is Phosphate import ATP-binding protein PstB 1 of Lactobacillus acidophilus (strain ATCC 700396 / NCK56 / N2 / NCFM).